The following is a 360-amino-acid chain: Dihydroorotate dehydrogenase (quinone) (360 aa).

FMN is bound by residues 60 to 64 and T84; that span reads AGFDK. Residue K64 participates in substrate binding. 109–113 lines the substrate pocket; it reads NRMGF. Residues N137 and N168 each coordinate FMN. Position 168 (N168) interacts with substrate. S171 functions as the Nucleophile in the catalytic mechanism. Position 173 (N173) interacts with substrate. FMN-binding residues include K213 and S241. 242–243 serves as a coordination point for substrate; the sequence is NT. FMN is bound by residues G264, G293, and 314–315; that span reads YS.

Belongs to the dihydroorotate dehydrogenase family. Type 2 subfamily. Monomer. The cofactor is FMN.

It localises to the cell membrane. The enzyme catalyses (S)-dihydroorotate + a quinone = orotate + a quinol. It functions in the pathway pyrimidine metabolism; UMP biosynthesis via de novo pathway; orotate from (S)-dihydroorotate (quinone route): step 1/1. Catalyzes the conversion of dihydroorotate to orotate with quinone as electron acceptor. The sequence is that of Dihydroorotate dehydrogenase (quinone) from Bartonella tribocorum (strain CIP 105476 / IBS 506).